The sequence spans 460 residues: Light-independent protochlorophyllide reductase subunit N (460 aa).

Residues cysteine 22, cysteine 47, and cysteine 107 each contribute to the [4Fe-4S] cluster site.

It belongs to the BchN/ChlN family. Protochlorophyllide reductase is composed of three subunits; ChlL, ChlN and ChlB. Forms a heterotetramer of two ChlB and two ChlN subunits. It depends on [4Fe-4S] cluster as a cofactor.

Its subcellular location is the plastid. It is found in the cyanelle. The catalysed reaction is chlorophyllide a + oxidized 2[4Fe-4S]-[ferredoxin] + 2 ADP + 2 phosphate = protochlorophyllide a + reduced 2[4Fe-4S]-[ferredoxin] + 2 ATP + 2 H2O. Its pathway is porphyrin-containing compound metabolism; chlorophyll biosynthesis (light-independent). Component of the dark-operative protochlorophyllide reductase (DPOR) that uses Mg-ATP and reduced ferredoxin to reduce ring D of protochlorophyllide (Pchlide) to form chlorophyllide a (Chlide). This reaction is light-independent. The NB-protein (ChlN-ChlB) is the catalytic component of the complex. The protein is Light-independent protochlorophyllide reductase subunit N of Cyanophora paradoxa.